Here is a 104-residue protein sequence, read N- to C-terminus: Large ribosomal subunit protein uL24 (104 aa).

A disordered region spans residues 41-61 (ISKKHKKPTPNEKQSGGIFEK).

Belongs to the universal ribosomal protein uL24 family. In terms of assembly, part of the 50S ribosomal subunit.

Functionally, one of two assembly initiator proteins, it binds directly to the 5'-end of the 23S rRNA, where it nucleates assembly of the 50S subunit. Its function is as follows. One of the proteins that surrounds the polypeptide exit tunnel on the outside of the subunit. The protein is Large ribosomal subunit protein uL24 of Wigglesworthia glossinidia brevipalpis.